A 119-amino-acid polypeptide reads, in one-letter code: Large ribosomal subunit protein bL19c (119 aa).

It belongs to the bacterial ribosomal protein bL19 family.

It localises to the plastid. The protein resides in the chloroplast. The protein is Large ribosomal subunit protein bL19c of Mesostigma viride (Green alga).